Consider the following 354-residue polypeptide: MNEAIIQLDHIDITFRQKKRVIEAVKDVTVHINQGDIYGIVGYSGAGKSTLVRVINLLQAPTNGKITVDGDVTFDQGKVQLSANALRQKRRDIGMIFQHFNLMAQKTAKENVAFALRHSSLSKTEKEHKVIELLELVGLSERADNYPAQLSGGQKQRVAIARALANDPKILISDEATSALDPKTTKQILALLQELNRKLGLTIVMITHEMQIVKDICNRVAVMQNGVLIEEGSVLDIFSNPKEALTQEFITTATGIDEALEKINQQDIVKHLPANALLAQLKYAGTSTDEPLLNSIYRQFEVTANILYGNIEILDHIPVGDMIVVLEGQAENILAAEKALHEAGVDVSILKRGA.

In terms of domain architecture, ABC transporter spans 8 to 250; sequence LDHIDITFRQ…PKEALTQEFI (243 aa). Residue 42–49 coordinates ATP; it reads GYSGAGKS.

Belongs to the ABC transporter superfamily. Methionine importer (TC 3.A.1.24) family. As to quaternary structure, the complex is composed of two ATP-binding proteins (MetN), two transmembrane proteins (MetI) and a solute-binding protein (MetQ).

The protein localises to the cell membrane. The enzyme catalyses L-methionine(out) + ATP + H2O = L-methionine(in) + ADP + phosphate + H(+). It carries out the reaction D-methionine(out) + ATP + H2O = D-methionine(in) + ADP + phosphate + H(+). Part of the ABC transporter complex MetNIQ involved in methionine import. Responsible for energy coupling to the transport system. The protein is Methionine import ATP-binding protein MetN of Streptococcus pyogenes serotype M12 (strain MGAS2096).